A 97-amino-acid chain; its full sequence is Putative septation protein SpoVG (97 aa).

This sequence belongs to the SpoVG family.

Essential for sporulation. Interferes with or is a negative regulator of the pathway leading to asymmetric septation. The protein is Putative septation protein SpoVG of Bacillus cytotoxicus (strain DSM 22905 / CIP 110041 / 391-98 / NVH 391-98).